The chain runs to 405 residues: Nuclear RNA export factor 2 (405 aa).

The interval methionine 1–threonine 33 is disordered. A compositionally biased stretch (low complexity) spans leucine 16–serine 26. The RRM domain occupies serine 26 to lysine 94. LRR repeat units lie at residues arginine 97–serine 118 and phenylalanine 123–glycine 144. Residues leucine 215–isoleucine 382 form the NTF2 domain.

The protein belongs to the NXF family.

It is found in the nucleus. In terms of biological role, involved in the export of cellular mRNA to the cytoplasm. Plays a role in the nuclear retention of unspliced mRNAs. The protein is Nuclear RNA export factor 2 of Caenorhabditis elegans.